Reading from the N-terminus, the 786-residue chain is Toll-like receptor 1 (786 aa).

The N-terminal stretch at 1-24 (MTSIFHFAIIFMLILQIRIQLSEE) is a signal peptide. At 25–580 (SEFLVDRSKN…HMSELSCNIT (556 aa)) the chain is on the extracellular side. N51 is a glycosylation site (N-linked (GlcNAc...) asparagine). LRR repeat units follow at residues 54–77 (QNYISELWTSDILSLSKLRILIIS), 78–101 (HNRIQYLDISVFKFNQELEYLDLS), 102–125 (HNKLVKISCHPTVNLKHLDLSFNA), 126–150 (FDALPICKEFGNMSQLKFLGLSTTH), 151–175 (LEKSSVLPIAHLNISKVLLVLGETY), 176–199 (GEKEDPEGLQDFNTESLHIVFPTN), 200–223 (KEFHFILDVSVKTVANLELSNIKC), 224–250 (VLEDNKCSYFLSILAKLQTNPKLSNLT), 251–278 (LNNIETTWNSFIRILQLVWHTTVWYFSI), 279–308 (SNVKLQGQLDFRDFDYSGTSLKALSIHQVV), 309–337 (SDVFGFPQSYIYEIFSNMNIKNFTVSGTR), 338–361 (MVHMLCPSKISPFLHLDFSNNLLT), 362–388 (DTVFENCGHLTELETLILQMNQLKELS), 389–414 (KIAEMTTQMKSLQQLDISQNSVSYDE), 415–437 (KKGDCSWTKSLLSLNMSSNILTD), 438–457 (TIFRCLPPRIKVLDLHSNKI), 458–478 (KSIPKQVVKLEALQELNVAFN), 479–500 (SLTDLPGCGSFSSLSVLIIDHN), and 501–524 (SVSHPSADFFQSCQKMRSIKAGDN). The cysteines at positions 110 and 132 are disulfide-linked. Residues N137 and N163 are each glycosylated (N-linked (GlcNAc...) asparagine). The cysteines at positions 223 and 230 are disulfide-linked. The tract at residues 313 to 316 (GFPQ) is interaction with bacterial lipopeptide. An N-linked (GlcNAc...) asparagine glycan is attached at N330. C343 and C368 form a disulfide bridge. A disulfide bridge links C419 with C442. N429 carries N-linked (GlcNAc...) asparagine glycosylation. Positions 525-579 (PFQCTCELGEFVKNIDQVSSEVLEGWPDSYKCDYPESYRGTLLKDFHMSELSCNI) constitute an LRRCT domain. N578 carries an N-linked (GlcNAc...) asparagine glycan. Residues 581–601 (LLIVTIVATMLVLAVTVTSLC) form a helical membrane-spanning segment. Over 602 to 786 (SYLDLPWYLR…NIKLTEQAKK (185 aa)) the chain is Cytoplasmic. In terms of domain architecture, TIR spans 635-776 (LQFHAFISYS…LFWANLRAAI (142 aa)).

It belongs to the Toll-like receptor family. Interacts (via extracellular domain) with TLR2. TLR2 seems to exist in heterodimers with either TLR1 or TLR6 before stimulation by the ligand. The heterodimers form bigger oligomers in response to their corresponding ligands as well as further heterotypic associations with other receptors such as CD14 and/or CD36. The activation cluster TLR2:TLR1:CD14 forms in response to triacylated lipopeptides. Binds MYD88 (via TIR domain). Interacts with CNPY3. Interacts with neutrophil recruitment protein from Aedes aegypti saliva; the interaction probably promotes activation of canonical NF-kappa-B signaling in skin-resident macrophages and subsequent expression of neutrophil chemoattractants. As to expression, ubiquitous. Highly expressed in spleen, ovary, peripheral blood leukocytes, thymus and small intestine.

It is found in the cell membrane. It localises to the cytoplasmic vesicle. Its subcellular location is the phagosome membrane. The protein localises to the membrane raft. The protein resides in the golgi apparatus. Functionally, participates in the innate immune response to microbial agents. Specifically recognizes diacylated and triacylated lipopeptides. Cooperates with TLR2 to mediate the innate immune response to bacterial lipoproteins or lipopeptides. Forms the activation cluster TLR2:TLR1:CD14 in response to triacylated lipopeptides, this cluster triggers signaling from the cell surface and subsequently is targeted to the Golgi in a lipid-raft dependent pathway. Acts via MYD88 and TRAF6, leading to NF-kappa-B activation, cytokine secretion and the inflammatory response. The polypeptide is Toll-like receptor 1 (TLR1) (Homo sapiens (Human)).